The following is a 155-amino-acid chain: 6,7-dimethyl-8-ribityllumazine synthase (155 aa).

5-amino-6-(D-ribitylamino)uracil contacts are provided by residues Phe-23, Ala-57–Glu-59, and Ala-81–Ile-83. Position 86–87 (Ser-86–Thr-87) interacts with (2S)-2-hydroxy-3-oxobutyl phosphate. Catalysis depends on His-89, which acts as the Proton donor. Phe-114 is a 5-amino-6-(D-ribitylamino)uracil binding site. Arg-128 is a binding site for (2S)-2-hydroxy-3-oxobutyl phosphate.

Belongs to the DMRL synthase family.

It catalyses the reaction (2S)-2-hydroxy-3-oxobutyl phosphate + 5-amino-6-(D-ribitylamino)uracil = 6,7-dimethyl-8-(1-D-ribityl)lumazine + phosphate + 2 H2O + H(+). It participates in cofactor biosynthesis; riboflavin biosynthesis; riboflavin from 2-hydroxy-3-oxobutyl phosphate and 5-amino-6-(D-ribitylamino)uracil: step 1/2. Catalyzes the formation of 6,7-dimethyl-8-ribityllumazine by condensation of 5-amino-6-(D-ribitylamino)uracil with 3,4-dihydroxy-2-butanone 4-phosphate. This is the penultimate step in the biosynthesis of riboflavin. The polypeptide is 6,7-dimethyl-8-ribityllumazine synthase (Geobacter sp. (strain M21)).